We begin with the raw amino-acid sequence, 494 residues long: Glutamate--tRNA ligase (494 aa).

Positions 15–25 (PSPTGNPHVGL) match the 'HIGH' region motif. Residues Cys-112, Cys-114, Cys-139, and Glu-141 each coordinate Zn(2+). The short motif at 260–264 (KLSKR) is the 'KMSKS' region element. ATP is bound at residue Lys-263.

This sequence belongs to the class-I aminoacyl-tRNA synthetase family. Glutamate--tRNA ligase type 1 subfamily. Monomer. Requires Zn(2+) as cofactor.

The protein localises to the cytoplasm. The catalysed reaction is tRNA(Glu) + L-glutamate + ATP = L-glutamyl-tRNA(Glu) + AMP + diphosphate. Its function is as follows. Catalyzes the attachment of glutamate to tRNA(Glu) in a two-step reaction: glutamate is first activated by ATP to form Glu-AMP and then transferred to the acceptor end of tRNA(Glu). In Streptomyces coelicolor (strain ATCC BAA-471 / A3(2) / M145), this protein is Glutamate--tRNA ligase.